The chain runs to 118 residues: MARIAGINIPDRKHAVIAITAIYGIGATRAKAICAATGIAESTKISELDEAKIDLLRAEVDKFTVEGDLRREVSMNIKRLMDLGCYRGIRHRRSLPLRGQRTKTNARTRKGPRKPIKK.

The interval Ser94–Lys118 is disordered.

The protein belongs to the universal ribosomal protein uS13 family. As to quaternary structure, part of the 30S ribosomal subunit. Forms a loose heterodimer with protein S19. Forms two bridges to the 50S subunit in the 70S ribosome.

Located at the top of the head of the 30S subunit, it contacts several helices of the 16S rRNA. In the 70S ribosome it contacts the 23S rRNA (bridge B1a) and protein L5 of the 50S subunit (bridge B1b), connecting the 2 subunits; these bridges are implicated in subunit movement. Contacts the tRNAs in the A and P-sites. The sequence is that of Small ribosomal subunit protein uS13 from Colwellia psychrerythraea (strain 34H / ATCC BAA-681) (Vibrio psychroerythus).